We begin with the raw amino-acid sequence, 298 residues long: UDP-N-acetylenolpyruvoylglucosamine reductase (298 aa).

The 166-residue stretch at 26–191 (KTGGAADVFV…LDATFSLALE (166 aa)) folds into the FAD-binding PCMH-type domain. Residue Arg170 is part of the active site. Residue Ser220 is the Proton donor of the active site. Residue Glu290 is part of the active site.

It belongs to the MurB family. Requires FAD as cofactor.

Its subcellular location is the cytoplasm. The catalysed reaction is UDP-N-acetyl-alpha-D-muramate + NADP(+) = UDP-N-acetyl-3-O-(1-carboxyvinyl)-alpha-D-glucosamine + NADPH + H(+). It participates in cell wall biogenesis; peptidoglycan biosynthesis. In terms of biological role, cell wall formation. The polypeptide is UDP-N-acetylenolpyruvoylglucosamine reductase (Listeria monocytogenes serovar 1/2a (strain ATCC BAA-679 / EGD-e)).